The sequence spans 398 residues: Meiosis-specific protein SPO11 (398 aa).

Residues 40 to 175 (CSNADVLAHI…LNIIPAQKGL (136 aa)) form the Topo IIA-type catalytic domain. Y135 serves as the catalytic O-(5'-phospho-DNA)-tyrosine intermediate. Mg(2+) contacts are provided by E233 and D288.

It belongs to the TOP6A family. The cofactor is Mg(2+).

Its subcellular location is the nucleus. It localises to the chromosome. It carries out the reaction ATP-dependent breakage, passage and rejoining of double-stranded DNA.. Functionally, required for meiotic recombination. Mediates DNA cleavage that forms the double-strand breaks (DSB) that initiate meiotic recombination. The action of SPO11 is important in setting off a regulatory chain of events encompassing 5' to 3' resection. When there are no SPO11-DSBs, resection of a site specific VDE-DSB takes place but it is faster than in wild-type meiosis and increases the risk of uncovering flanking homology. In Saccharomyces cerevisiae (strain ATCC 204508 / S288c) (Baker's yeast), this protein is Meiosis-specific protein SPO11 (SPO11).